The sequence spans 330 residues: Beta-ketoacyl-[acyl-carrier-protein] synthase III (330 aa).

Residues cysteine 115 and histidine 255 contribute to the active site. Residues 256–260 (QANFR) are ACP-binding. Asparagine 285 is an active-site residue.

It belongs to the thiolase-like superfamily. FabH family. As to quaternary structure, homodimer.

The protein localises to the cytoplasm. The catalysed reaction is malonyl-[ACP] + acetyl-CoA + H(+) = 3-oxobutanoyl-[ACP] + CO2 + CoA. The protein operates within lipid metabolism; fatty acid biosynthesis. Catalyzes the condensation reaction of fatty acid synthesis by the addition to an acyl acceptor of two carbons from malonyl-ACP. Catalyzes the first condensation reaction which initiates fatty acid synthesis and may therefore play a role in governing the total rate of fatty acid production. Possesses both acetoacetyl-ACP synthase and acetyl transacylase activities. Its substrate specificity determines the biosynthesis of branched-chain and/or straight-chain of fatty acids. This is Beta-ketoacyl-[acyl-carrier-protein] synthase III from Helicobacter pylori (strain G27).